The primary structure comprises 637 residues: Proton myo-inositol cotransporter (637 aa).

Residues 1-65 (MSRKASEDVE…AARRQFQRDE (65 aa)) are Cytoplasmic-facing. A Phosphoserine modification is found at serine 6. The disordered stretch occupies residues 16 to 38 (LSSLMGERRRRQPEPGAPGGERS). A phosphoserine mark is found at serine 44 and serine 47. Residues 66–86 (TPAFVYAAAAFSALGGFLFGY) traverse the membrane as a helical segment. The Extracellular segment spans residues 87–114 (DTGVVSGAMLLLRRQMRLGAMWQELLVS). Residues 115 to 135 (GAVGAAAVAALAGGALNGALG) traverse the membrane as a helical segment. Residues 136–137 (RR) are Cytoplasmic-facing. The chain crosses the membrane as a helical span at residues 138–158 (SAILLASALCTVGSAVLAAAA). Topologically, residues 159-167 (NKETLLAGR) are extracellular. A helical membrane pass occupies residues 168–188 (LVVGLGIGIASMTVPVYIAEV). Over 189–201 (SPPNLRGRLVTIN) the chain is Cytoplasmic. The helical transmembrane segment at 202–222 (TLFITGGQFFASVVDGAFSYL) threads the bilayer. Topologically, residues 223-228 (QKDGWR) are extracellular. Residues 229-249 (YMLGLAAIPAVIQFLGFLFLP) traverse the membrane as a helical segment. The Cytoplasmic portion of the chain corresponds to 250-313 (ESPRWLIQKG…RMLSYPPTRR (64 aa)). A helical membrane pass occupies residues 314 to 334 (ALAVGCGLQMFQQLSGINTIM). Residues 335-352 (YYSATILQMSGVEDDRLA) are Extracellular-facing. Residues 353–373 (IWLASITAFTNFIFTLVGVWL) traverse the membrane as a helical segment. The Cytoplasmic portion of the chain corresponds to 374 to 382 (VEKVGRRKL). Residues 383–403 (TFGSLAGTTVALTILALGFLL) form a helical membrane-spanning segment. Residues 404–497 (SAQVSPRVTF…SFCPTPYSWT (94 aa)) lie on the Extracellular side of the membrane. N-linked (GlcNAc...) asparagine glycosylation is found at asparagine 422, asparagine 447, and asparagine 474. Residues 498-518 (ALVGLVLYLVFFAPGMGPMPW) traverse the membrane as a helical segment. The Cytoplasmic portion of the chain corresponds to 519–538 (TVNSEIYPLWARSTGNACSA). The chain crosses the membrane as a helical span at residues 539–559 (GINWIFNVLVSLTFLHTAEYL). Residues 560 to 562 (TYY) are Extracellular-facing. A helical transmembrane segment spans residues 563–583 (GAFFLYAGFAAVGLLFVYGCL). Topologically, residues 584–637 (PETKGKKLEEIESLFDHRLCTCGTADSDEGRYIEYIRVKGSNYHLSDNDASDVE) are cytoplasmic. A phosphoserine mark is found at serine 629 and serine 634.

It belongs to the major facilitator superfamily. Sugar transporter (TC 2.A.1.1) family.

The protein resides in the cell membrane. It carries out the reaction myo-inositol(out) + H(+)(out) = myo-inositol(in) + H(+)(in). Functionally, h(+)-myo-inositol cotransporter. Can also transport related stereoisomers. The chain is Proton myo-inositol cotransporter from Rattus norvegicus (Rat).